Here is a 344-residue protein sequence, read N- to C-terminus: MTCLTLALDAMGGDFGPHVTVPASLQALASNPKLKLLLVGNPDTITSLLVNADPLLLERLQVIPAEHVIAGDAKPSQAIRASRGTSMRIALELVKNGDAAACVSAGNTGALMGLAKMMIKPLDGIERPALMTVIPNQQRSKTVVLDLGANVECDSTMLVQFAVMGSVMAEEVVGITNPRVALLNIGEEETKGLDNIREAAAVLKNTPTINYIGYLEGNDLLTGKTDVMVCDGFVGNVTLKTMEGVIRMFLSLLKSSGEGKKQSWWLKLIGRWLQKRVAKRFGHLNPDQYNGACLLGLRGIVIKSHGAANQRAFAVAIEQAVQAVQRQVPQRIAARLEAVLPKSD.

Belongs to the PlsX family. Homodimer. Probably interacts with PlsY.

It is found in the cytoplasm. The enzyme catalyses a fatty acyl-[ACP] + phosphate = an acyl phosphate + holo-[ACP]. It participates in lipid metabolism; phospholipid metabolism. Functionally, catalyzes the reversible formation of acyl-phosphate (acyl-PO(4)) from acyl-[acyl-carrier-protein] (acyl-ACP). This enzyme utilizes acyl-ACP as fatty acyl donor, but not acyl-CoA. This Yersinia enterocolitica serotype O:8 / biotype 1B (strain NCTC 13174 / 8081) protein is Phosphate acyltransferase.